The primary structure comprises 506 residues: Chromosomal replication initiator protein DnaA (506 aa).

Residues 1-87 (MSVELWQQCV…IGSRRSSAPR (87 aa)) are domain I, interacts with DnaA modulators. Residues 87 to 169 (RAAPNAPVSA…QVEGALKHTS (83 aa)) are domain II. Positions 135–154 (DSFDAMAEPAAAPPSGGGRA) are disordered. A compositionally biased stretch (low complexity) spans 139–148 (AMAEPAAAPP). Positions 170-386 (YLNRTFTFDT…GALKRVIAHS (217 aa)) are domain III, AAA+ region. The ATP site is built by Gly-214, Gly-216, Lys-217, and Thr-218. Positions 387–506 (HFMGRDITIE…YKNLLRTLTT (120 aa)) are domain IV, binds dsDNA.

It belongs to the DnaA family. In terms of assembly, oligomerizes as a right-handed, spiral filament on DNA at oriC.

The protein localises to the cytoplasm. Plays an essential role in the initiation and regulation of chromosomal replication. ATP-DnaA binds to the origin of replication (oriC) to initiate formation of the DNA replication initiation complex once per cell cycle. Binds the DnaA box (a 9 base pair repeat at the origin) and separates the double-stranded (ds)DNA. Forms a right-handed helical filament on oriC DNA; dsDNA binds to the exterior of the filament while single-stranded (ss)DNA is stabiized in the filament's interior. The ATP-DnaA-oriC complex binds and stabilizes one strand of the AT-rich DNA unwinding element (DUE), permitting loading of DNA polymerase. After initiation quickly degrades to an ADP-DnaA complex that is not apt for DNA replication. Binds acidic phospholipids. Its function is as follows. Non-cooperatively binds DnaA boxes in the minimal plasmid RK2 replication origin (oriV). In vitro in the presence of plasmid RK2-derived TrfA and E.coli protein HU, forms an open complex at oriV. This complex was not however competent for formation of a pre-priming complex with E.coli DnaB and DnaC. Broad host range plasmid RK2 requires not only DnaA for replication but also TrfA and host factors. This is Chromosomal replication initiator protein DnaA from Pseudomonas putida (strain ATCC 47054 / DSM 6125 / CFBP 8728 / NCIMB 11950 / KT2440).